A 280-amino-acid polypeptide reads, in one-letter code: Protein phosphatase 1 regulatory subunit 3B-A (280 aa).

The PP1-binding motif signature appears at 58-61 (RVSF). The 109-residue stretch at 121 to 229 (RNRLQADSVC…SNKSLNYKIA (109 aa)) folds into the CBM21 domain.

As to quaternary structure, interacts with glycogen, PPP1CC catalytic subunit of PP1 and PYGL. Associates with glycogen particles. Forms complexes with debranching enzyme, glycogen phosphorylase, glycogen synthase and phosphorylase kinase which is necessary for its regulation of PP1 activity.

Acts as a glycogen-targeting subunit for phosphatase PP1. Facilitates interaction of the PP1 with enzymes of the glycogen metabolism and regulates its activity. Suppresses the rate at which PP1 dephosphorylates (inactivates) glycogen phosphorylase and enhances the rate at which it activates glycogen synthase and therefore limits glycogen breakdown. The protein is Protein phosphatase 1 regulatory subunit 3B-A (ppp1r3b-a) of Xenopus laevis (African clawed frog).